A 388-amino-acid polypeptide reads, in one-letter code: Succinate--CoA ligase [ADP-forming] subunit beta (388 aa).

Positions 9-244 constitute an ATP-grasp domain; sequence KQLFAEFGLP…PSQEDEREAH (236 aa). Residues Lys46, 53-55, Glu99, Ser102, and Glu107 each bind ATP; that span reads GRG. Asn199 and Asp213 together coordinate Mg(2+). Residues Asn264 and 321–323 each bind substrate; that span reads GIV.

Belongs to the succinate/malate CoA ligase beta subunit family. As to quaternary structure, heterotetramer of two alpha and two beta subunits. Mg(2+) serves as cofactor.

It carries out the reaction succinate + ATP + CoA = succinyl-CoA + ADP + phosphate. It catalyses the reaction GTP + succinate + CoA = succinyl-CoA + GDP + phosphate. Its pathway is carbohydrate metabolism; tricarboxylic acid cycle; succinate from succinyl-CoA (ligase route): step 1/1. Succinyl-CoA synthetase functions in the citric acid cycle (TCA), coupling the hydrolysis of succinyl-CoA to the synthesis of either ATP or GTP and thus represents the only step of substrate-level phosphorylation in the TCA. The beta subunit provides nucleotide specificity of the enzyme and binds the substrate succinate, while the binding sites for coenzyme A and phosphate are found in the alpha subunit. The polypeptide is Succinate--CoA ligase [ADP-forming] subunit beta (Vibrio campbellii (strain ATCC BAA-1116)).